Consider the following 292-residue polypeptide: 2-(5''-triphosphoribosyl)-3'-dephosphocoenzyme-A synthase (292 aa).

Belongs to the CitG/MdcB family.

It carries out the reaction 3'-dephospho-CoA + ATP = 2'-(5''-triphospho-alpha-D-ribosyl)-3'-dephospho-CoA + adenine. Catalyzes the formation of 2-(5''-triphosphoribosyl)-3'-dephosphocoenzyme-A, the precursor of the prosthetic group of the holo-acyl carrier protein (gamma chain) of citrate lyase, from ATP and dephospho-CoA. The polypeptide is 2-(5''-triphosphoribosyl)-3'-dephosphocoenzyme-A synthase (Escherichia coli O17:K52:H18 (strain UMN026 / ExPEC)).